The chain runs to 141 residues: Oleosin 14.9 kDa (141 aa).

Basic and acidic residues predominate over residues 1–22 (MADQTRTHHEMISRDSTQEAHP). Residues 1-24 (MADQTRTHHEMISRDSTQEAHPKA) are disordered. The segment at 1 to 29 (MADQTRTHHEMISRDSTQEAHPKARQMVK) is polar. The interval 30 to 141 (AATAVTAGGS…NIGVQHQQVS (112 aa)) is hydrophobic. The next 3 membrane-spanning stretches (helical) occupy residues 38–58 (GSLLVLSGLTLAGTVIALTVA), 60–80 (PLLVIFSPVLVPAVVTVALII), and 81–101 (TGFLASGGFGIAAITAFSWLY).

This sequence belongs to the oleosin family.

The protein resides in the lipid droplet. It is found in the membrane. Its function is as follows. May have a structural role to stabilize the lipid body during desiccation of the seed by preventing coalescence of the oil. Probably interacts with both lipid and phospholipid moieties of lipid bodies. May also provide recognition signals for specific lipase anchorage in lipolysis during seedling growth. The protein is Oleosin 14.9 kDa (OL3) of Arabidopsis thaliana (Mouse-ear cress).